A 363-amino-acid chain; its full sequence is Peptide chain release factor 1 (363 aa).

At glutamine 237 the chain carries N5-methylglutamine. Basic and acidic residues predominate over residues glutamate 286–arginine 296. A disordered region spans residues glutamate 286–arginine 305.

The protein belongs to the prokaryotic/mitochondrial release factor family. Methylated by PrmC. Methylation increases the termination efficiency of RF1.

The protein resides in the cytoplasm. Its function is as follows. Peptide chain release factor 1 directs the termination of translation in response to the peptide chain termination codons UAG and UAA. The sequence is that of Peptide chain release factor 1 from Shewanella baltica (strain OS155 / ATCC BAA-1091).